The sequence spans 349 residues: tRNA pseudouridine synthase D (349 aa).

Phenylalanine 27 lines the substrate pocket. The Nucleophile role is filled by aspartate 80. Asparagine 129 serves as a coordination point for substrate. The TRUD domain maps to 155 to 303; that stretch reads GVPNYFGPQR…VEAARRAMLL (149 aa). Residue phenylalanine 329 coordinates substrate.

The protein belongs to the pseudouridine synthase TruD family.

The enzyme catalyses uridine(13) in tRNA = pseudouridine(13) in tRNA. In terms of biological role, responsible for synthesis of pseudouridine from uracil-13 in transfer RNAs. The protein is tRNA pseudouridine synthase D of Cronobacter sakazakii (strain ATCC BAA-894) (Enterobacter sakazakii).